We begin with the raw amino-acid sequence, 180 residues long: Large ribosomal subunit protein uL6 (180 aa).

This sequence belongs to the universal ribosomal protein uL6 family. Part of the 50S ribosomal subunit.

Functionally, this protein binds to the 23S rRNA, and is important in its secondary structure. It is located near the subunit interface in the base of the L7/L12 stalk, and near the tRNA binding site of the peptidyltransferase center. The protein is Large ribosomal subunit protein uL6 of Christiangramia forsetii (strain DSM 17595 / CGMCC 1.15422 / KT0803) (Gramella forsetii).